Consider the following 633-residue polypeptide: MFYTEAFDVIVVGGGHAGTEAALAAARMGANTLLLTHNIETIGQMSCNPAIGGIGKGHLVKEIDALGGAMALAIDKGGIQFRTLNSSKGPAVRATRAQADRTLYKNAIRDIVENQENLTLFQQSVDDLIVENDRVCGVVTQMGLKFKAKSVVLTVGTFLGGTIHIGLENYRGGRAGDPPSIALADRLRALPFRVDRLKTGTPARLDARSLDFSVMQPQPGDSPTPVFSFMGDRAMHPTQIPCYITHTNEKTHDIIRGGLDRSPMFTGVIEGIGPRYCPSIEDKITRFADKTSHQIFVEPEGLNSIEVYPNGISTSLPFDVQMNLVRSIKGFENAHIVRPGYAIEYDFFDPRDLKQTLETKFIQGLFFAGQINGTTGYEEAGAQGLVAGANAALQVQQKDPFILRRDQAYMGVLIDDLATMGTKEPYRMFTSRAEYRLLLREDNADSRLTAMGREIGLVDDARWAKYNDKMEAVETELQRLRGQWIHPDHAATPQLNTMLKNPVSREHSLEELIRRPEMTYSQLMKIESVGPGIDDPIAAEQVEIQIKYAGYIARQMDEIAKTQRHENTLLPIDMDFSKISGLSNEVVAKLTEARPETIGKASRISGITPAAISLLLVYLKKHGMLRKQDKISA.

Residues 13-18 (GGGHAG), Val125, and Ser180 each bind FAD. 273–287 (GPRYCPSIEDKITRF) lines the NAD(+) pocket. Gln370 serves as a coordination point for FAD.

Belongs to the MnmG family. As to quaternary structure, homodimer. Heterotetramer of two MnmE and two MnmG subunits. The cofactor is FAD.

Its subcellular location is the cytoplasm. Its function is as follows. NAD-binding protein involved in the addition of a carboxymethylaminomethyl (cmnm) group at the wobble position (U34) of certain tRNAs, forming tRNA-cmnm(5)s(2)U34. This chain is tRNA uridine 5-carboxymethylaminomethyl modification enzyme MnmG, found in Alteromonas mediterranea (strain DSM 17117 / CIP 110805 / LMG 28347 / Deep ecotype).